An 892-amino-acid chain; its full sequence is DNA mismatch repair protein MutS (892 aa).

607–614 provides a ligand contact to ATP; that stretch reads GPNMSGKS.

Belongs to the DNA mismatch repair MutS family.

Functionally, this protein is involved in the repair of mismatches in DNA. It is possible that it carries out the mismatch recognition step. This protein has a weak ATPase activity. The chain is DNA mismatch repair protein MutS from Bacillus cereus (strain G9842).